The chain runs to 159 residues: ATP synthase subunit b (159 aa).

A helical transmembrane segment spans residues 7 to 27 (VIFMTIINFCILVAILKHFFW).

This sequence belongs to the ATPase B chain family. As to quaternary structure, F-type ATPases have 2 components, F(1) - the catalytic core - and F(0) - the membrane proton channel. F(1) has five subunits: alpha(3), beta(3), gamma(1), delta(1), epsilon(1). F(0) has three main subunits: a(1), b(2) and c(10-14). The alpha and beta chains form an alternating ring which encloses part of the gamma chain. F(1) is attached to F(0) by a central stalk formed by the gamma and epsilon chains, while a peripheral stalk is formed by the delta and b chains.

It is found in the cell membrane. Its function is as follows. F(1)F(0) ATP synthase produces ATP from ADP in the presence of a proton or sodium gradient. F-type ATPases consist of two structural domains, F(1) containing the extramembraneous catalytic core and F(0) containing the membrane proton channel, linked together by a central stalk and a peripheral stalk. During catalysis, ATP synthesis in the catalytic domain of F(1) is coupled via a rotary mechanism of the central stalk subunits to proton translocation. Functionally, component of the F(0) channel, it forms part of the peripheral stalk, linking F(1) to F(0). This Clostridium botulinum (strain Alaska E43 / Type E3) protein is ATP synthase subunit b.